Consider the following 837-residue polypeptide: GRIP1-associated protein 1 (837 aa).

Alanine 2 carries the N-acetylalanine modification. The stretch at 4 to 158 (ALSEEEFQRM…ALQERYGKEA (155 aa)) forms a coiled coil. Disordered stretches follow at residues 161–180 (PSAV…PISL), 555–577 (KGKE…ERDG), 647–666 (SEMN…VSSF), and 677–702 (SSAI…LSDE). Residues 204–637 (EQLQGLESSK…LQEILTNSKS (434 aa)) are a coiled coil. The span at 648-666 (EMNSPSRTQTGDSSSVSSF) shows a compositional bias: polar residues. Residues serine 651, serine 662, serine 664, serine 665, serine 684, serine 686, serine 687, and serine 688 each carry the phosphoserine modification. The segment covering 678–690 (SAIPARSLSSSPQ) has biased composition (low complexity). Coiled coils occupy residues 697–731 (AELS…LEVS) and 781–810 (DENL…KDME). A Phosphoserine modification is found at serine 826.

As to quaternary structure, interacts with GRIP1, GRIP2 and AMPA receptors. Interacts (via C-terminus) with MAPK8/JNK1 and with MAP3K1/MEKK1; the interaction promotes MAP3K1-mediated phosphorylation of MAPK8. Interacts (via N-terminus) with RAB4A (in GTP-bound form). Interacts (via C-terminus) with STX12. Post-translationally, proteolytically cleaved by caspase-3. A minor C-terminal proteolytic fragment of 30 kDa is produced. Proteolytic cleavage is required for JNK signaling activation. As to expression, expressed in the central nervous system; especially in neurons.

The protein localises to the early endosome membrane. It localises to the recycling endosome membrane. The protein resides in the cell projection. It is found in the axon. Its subcellular location is the dendrite. The protein localises to the synapse. Regulates the endosomal recycling back to the neuronal plasma membrane, possibly by connecting early and late recycling endosomal domains and promoting segregation of recycling endosomes from early endosomal membranes. Involved in the localization of recycling endosomes to dendritic spines, thereby playing a role in the maintenance of dendritic spine morphology. Required for the activity-induced AMPA receptor recycling to dendrite membranes and for long-term potentiation and synaptic plasticity. Its function is as follows. Functions as a scaffold protein in neurons to facilitate MAP3K1/MEKK1-mediated activation of the JNK1 kinase by phosphorylation, possibly by bringing MAP3K1/MEKK1 and JNK1 in close proximity. The sequence is that of GRIP1-associated protein 1 (Gripap1) from Rattus norvegicus (Rat).